The primary structure comprises 249 residues: Probable transcriptional regulatory protein Strop_1792 (249 aa).

The protein belongs to the TACO1 family.

The protein localises to the cytoplasm. The chain is Probable transcriptional regulatory protein Strop_1792 from Salinispora tropica (strain ATCC BAA-916 / DSM 44818 / JCM 13857 / NBRC 105044 / CNB-440).